Reading from the N-terminus, the 287-residue chain is Heavy metal-associated isoprenylated plant protein 4 (287 aa).

2 consecutive HMA domains span residues 14–80 (IITA…VELI) and 112–176 (IRTT…KHAE). 4 residues coordinate a metal cation: Cys25, Cys28, Cys123, and Cys126. Residues 179 to 235 (SSKTEEEKKKEEEDKKKKEEEDKKKKEDEKKKEEEKKKEEENKKKEGEKKKEEVKVE) adopt a coiled-coil conformation. The disordered stretch occupies residues 181-232 (KTEEEKKKEEEDKKKKEEEDKKKKEDEKKKEEEKKKEEENKKKEGEKKKEEV). Cys284 bears the Cysteine methyl ester mark. The S-farnesyl cysteine moiety is linked to residue Cys284. A propeptide spans 285–287 (RIV) (removed in mature form).

The protein belongs to the HIPP family.

Its function is as follows. Heavy-metal-binding protein. The protein is Heavy metal-associated isoprenylated plant protein 4 of Arabidopsis thaliana (Mouse-ear cress).